Reading from the N-terminus, the 317-residue chain is Tumor-associated calcium signal transducer 2 (317 aa).

A signal peptide spans 1 to 24; the sequence is MARGLDLAPLLLLLLAMATRFCTA. Topologically, residues 25–270 are extracellular; it reads QSNCTCPTNK…QFSMKRLTAG (246 aa). An N-linked (GlcNAc...) asparagine glycan is attached at Asn27. The Thyroglobulin type-1 domain occupies 64–139; the sequence is TSKCLLLKAR…TDKGDQSLRC (76 aa). Intrachain disulfides connect Cys67/Cys102, Cys113/Cys119, and Cys121/Cys139. Residue Asn114 is glycosylated (N-linked (GlcNAc...) asparagine). Asn162 and Asn202 each carry an N-linked (GlcNAc...) asparagine glycan. Residues 271–291 traverse the membrane as a helical segment; it reads VIAVIAVVSVAVVAGVVVLVV. Topologically, residues 292 to 317 are cytoplasmic; the sequence is TKRRKSGKYKKVELKELGEMRSEPSL.

Belongs to the EPCAM family. As to expression, expressed in kidney, lung, ovary and testis. High levels of expression in immortalized keratinocytes.

The protein resides in the membrane. Functionally, may function as a growth factor receptor. The polypeptide is Tumor-associated calcium signal transducer 2 (Tacstd2) (Mus musculus (Mouse)).